The following is a 364-amino-acid chain: Probable methyltransferase ICS2 (364 aa).

6 residues coordinate S-adenosyl-L-homocysteine: Y18, C61, D98, L99, S133, and F134. Residues N172, D258, F260, and N261 each coordinate Mg(2+).

It belongs to the methyltransferase superfamily. Type-7 methyltransferase family. Mg(2+) serves as cofactor.

Functionally, no detectable N-methyltransferase activity. The sequence is that of Probable methyltransferase ICS2 from Camellia irrawadiensis (Burmese tea).